The following is a 416-amino-acid chain: Calreticulin (416 aa).

The N-terminal stretch at 1-17 (MLLSVPLLLGLLGLAAA) is a signal peptide. An N-domain region spans residues 18-197 (DPAIYFKEQF…NSQVESGSLE (180 aa)). Residue Q26 participates in Ca(2+) binding. K48 is subject to N6-acetyllysine. Ca(2+)-binding residues include K62 and K64. An N6-(2-hydroxyisobutyryl)lysine modification is found at K64. A disulfide bond links C105 and C137. Y109, K111, Y128, and D135 together coordinate an alpha-D-glucoside. Residue K159 is modified to N6-acetyllysine. One copy of the 1-1 repeat lies at 191-202 (VESGSLEDDWDF). Residues 191–255 (VESGSLEDDW…DAKKPEDWDE (65 aa)) are 4 X approximate repeats. The tract at residues 193-277 (SGSLEDDWDF…NPEYKGEWKP (85 aa)) is disordered. A P-domain region spans residues 198 to 308 (DDWDFLPPKK…YSPDANIYAY (111 aa)). Residues 207 to 251 (KIKDPDAAKPEDWDERAKIDDPTDSKPEDWDKPEHIPDPDAKKPE) are compositionally biased toward basic and acidic residues. K209 carries the post-translational modification N6-acetyllysine. 6 consecutive repeat copies span residues 210-221 (DPDAAKPEDWDE), 227-238 (DPTDSKPEDWDK), 244-255 (DPDAKKPEDWDE), 259-269 (GEWEPPVIQNP), 273-283 (GEWKPRQIDNP), and 287-297 (GTWIHPEIDNP). The tract at residues 237–270 (DKPEHIPDPDAKKPEDWDEEMDGEWEPPVIQNPE) is interaction with PPIB. Residues 252–261 (DWDEEMDGEW) are compositionally biased toward acidic residues. The interval 259 to 297 (GEWEPPVIQNPEYKGEWKPRQIDNPDYKGTWIHPEIDNP) is 3 X approximate repeats. Residues 309 to 416 (DSFAVLGLDL…ESPGQAKDEL (108 aa)) are C-domain. Residue D317 participates in an alpha-D-glucoside binding. D328 serves as a coordination point for Ca(2+). The disordered stretch occupies residues 350 to 416 (TKAAEKQMKD…ESPGQAKDEL (67 aa)). The segment covering 352–379 (AAEKQMKDKQDEEQRLKEEEEDKKRKEE) has biased composition (basic and acidic residues). Residues 380-408 (EEAEDKEDDDDRDEDEDEEDEKEEDEEES) show a composition bias toward acidic residues. Positions 413–416 (KDEL) match the Prevents secretion from ER motif.

It belongs to the calreticulin family. Monomer. Interacts with GABARAP, NR3C1, PDIA3/ERp57 and TRIM21. Interacts (via P-domain) with PDIA5. Interacts with PPIB. Interacts with SPACA9. Component of an EIF2 complex at least composed of CELF1/CUGBP1, CALR, CALR3, EIF2S1, EIF2S2, HSP90B1 and HSPA5. Interacts with CLCC1.

It localises to the endoplasmic reticulum lumen. Its subcellular location is the cytoplasm. The protein resides in the cytosol. It is found in the cytolytic granule. The protein localises to the secreted. It localises to the extracellular space. Its subcellular location is the extracellular matrix. The protein resides in the cell surface. It is found in the sarcoplasmic reticulum lumen. The protein localises to the cytoplasmic vesicle. It localises to the secretory vesicle. Its subcellular location is the cortical granule. Functionally, calcium-binding chaperone that promotes folding, oligomeric assembly and quality control in the endoplasmic reticulum (ER) via the calreticulin/calnexin cycle. This lectin interacts transiently with almost all of the monoglucosylated glycoproteins that are synthesized in the ER. Interacts with the DNA-binding domain of NR3C1 and mediates its nuclear export. Involved in maternal gene expression regulation. May participate in oocyte maturation via the regulation of calcium homeostasis. Present in the cortical granules of non-activated oocytes, is exocytosed during the cortical reaction in response to oocyte activation and might participate in the block to polyspermy. The protein is Calreticulin (Calr) of Mus musculus (Mouse).